The sequence spans 156 residues: Phosphopantetheine adenylyltransferase (156 aa).

Threonine 10 provides a ligand contact to substrate. Residues 10 to 11 (TF) and histidine 18 each bind ATP. The substrate site is built by lysine 42, leucine 74, and arginine 88. Residues 89-91 (GIR), glutamate 99, and 124-130 (WAFISSS) contribute to the ATP site.

The protein belongs to the bacterial CoaD family. Homohexamer. Requires Mg(2+) as cofactor.

Its subcellular location is the cytoplasm. The enzyme catalyses (R)-4'-phosphopantetheine + ATP + H(+) = 3'-dephospho-CoA + diphosphate. It functions in the pathway cofactor biosynthesis; coenzyme A biosynthesis; CoA from (R)-pantothenate: step 4/5. Reversibly transfers an adenylyl group from ATP to 4'-phosphopantetheine, yielding dephospho-CoA (dPCoA) and pyrophosphate. The chain is Phosphopantetheine adenylyltransferase from Hamiltonella defensa subsp. Acyrthosiphon pisum (strain 5AT).